Reading from the N-terminus, the 155-residue chain is Small ribosomal subunit protein uS7cz/uS7cy (155 aa).

This sequence belongs to the universal ribosomal protein uS7 family. In terms of assembly, part of the 30S ribosomal subunit.

It is found in the plastid. It localises to the chloroplast. Functionally, one of the primary rRNA binding proteins, it binds directly to 16S rRNA where it nucleates assembly of the head domain of the 30S subunit. This Phaseolus vulgaris (Kidney bean) protein is Small ribosomal subunit protein uS7cz/uS7cy (rps7-A).